The chain runs to 502 residues: Probable malate:quinone oxidoreductase (502 aa).

Belongs to the MQO family. FAD is required as a cofactor.

The catalysed reaction is (S)-malate + a quinone = a quinol + oxaloacetate. The protein operates within carbohydrate metabolism; tricarboxylic acid cycle; oxaloacetate from (S)-malate (quinone route): step 1/1. This Oceanobacillus iheyensis (strain DSM 14371 / CIP 107618 / JCM 11309 / KCTC 3954 / HTE831) protein is Probable malate:quinone oxidoreductase.